Consider the following 225-residue polypeptide: Cytidylate kinase (225 aa).

Glycine 11–threonine 19 contributes to the ATP binding site.

It belongs to the cytidylate kinase family. Type 1 subfamily.

It is found in the cytoplasm. The catalysed reaction is CMP + ATP = CDP + ADP. It catalyses the reaction dCMP + ATP = dCDP + ADP. This Bacillus pumilus (strain SAFR-032) protein is Cytidylate kinase.